Here is a 1330-residue protein sequence, read N- to C-terminus: Paired amphipathic helix protein Sin3-like 3 (1330 aa).

PAH domains follow at residues 8-78 (QKLT…LPKG) and 94-164 (KRVE…LPDT). Basic and acidic residues predominate over residues 191-246 (IITPHPDHDYGTEHIDQDRERPIKKENKEHMRGTNKENEHRDARDFEPHSKKEQFL). The interval 191–281 (IITPHPDHDY…VPSSSTYDEK (91 aa)) is disordered. The segment covering 262-277 (ISNQSKLSGAVPSSST) has biased composition (polar residues). The PAH 3 domain occupies 283-351 (AMKSYSQDLA…DSFIEFLVQC (69 aa)). 5 disordered regions span residues 373–401 (GEGK…DRDH), 718–775 (NQNV…GRTS), 789–808 (KNVV…SIER), 882–906 (QEMA…FEED), and 920–1002 (SKAN…EAEC). The segment covering 383-401 (DNDRDQEHKRDDGLRDRDH) has biased composition (basic and acidic residues). Low complexity predominate over residues 723 to 734 (SGSSSAGESEGS). The span at 789–800 (KNVVTSDEKPES) shows a compositional bias: basic and acidic residues. The segment covering 920–932 (SKANDSTGNNISG) has biased composition (polar residues). Composition is skewed to basic and acidic residues over residues 933-949 (DRSR…RAEN) and 956-968 (NAAR…RNEY). Positions 980–989 (GGEDPEDDLD) are enriched in acidic residues. Ser-996 is subject to Phosphoserine.

Interacts with ERF7 and the histone deacetylase HDA19.

Its subcellular location is the nucleus. Functionally, acts as a transcriptional repressor. Interacts with ERF7 to repress genes in abscisic acid and drought stress responses. The heterodimer represses transcription by tethering SNL3 to DNA. The sequence is that of Paired amphipathic helix protein Sin3-like 3 (SNL3) from Arabidopsis thaliana (Mouse-ear cress).